The primary structure comprises 182 residues: Orotate phosphoribosyltransferase (182 aa).

5-phospho-alpha-D-ribose 1-diphosphate-binding positions include Arg91, Lys92, Lys95, His97, and Glu117 to Ser125. Orotate-binding residues include Thr121 and Arg149.

This sequence belongs to the purine/pyrimidine phosphoribosyltransferase family. PyrE subfamily. In terms of assembly, homodimer. Mg(2+) serves as cofactor.

It catalyses the reaction orotidine 5'-phosphate + diphosphate = orotate + 5-phospho-alpha-D-ribose 1-diphosphate. It functions in the pathway pyrimidine metabolism; UMP biosynthesis via de novo pathway; UMP from orotate: step 1/2. Catalyzes the transfer of a ribosyl phosphate group from 5-phosphoribose 1-diphosphate to orotate, leading to the formation of orotidine monophosphate (OMP). This chain is Orotate phosphoribosyltransferase, found in Pyrococcus furiosus (strain ATCC 43587 / DSM 3638 / JCM 8422 / Vc1).